The following is a 265-amino-acid chain: 4-hydroxy-tetrahydrodipicolinate reductase (265 aa).

NAD(+) is bound by residues 9-14 (GALGRM), 100-102 (GTT), and 124-127 (SPNM). Histidine 158 functions as the Proton donor/acceptor in the catalytic mechanism. Residue histidine 159 participates in (S)-2,3,4,5-tetrahydrodipicolinate binding. The Proton donor role is filled by lysine 162. Residue 168–169 (GT) participates in (S)-2,3,4,5-tetrahydrodipicolinate binding.

The protein belongs to the DapB family.

It localises to the cytoplasm. The catalysed reaction is (S)-2,3,4,5-tetrahydrodipicolinate + NAD(+) + H2O = (2S,4S)-4-hydroxy-2,3,4,5-tetrahydrodipicolinate + NADH + H(+). The enzyme catalyses (S)-2,3,4,5-tetrahydrodipicolinate + NADP(+) + H2O = (2S,4S)-4-hydroxy-2,3,4,5-tetrahydrodipicolinate + NADPH + H(+). It functions in the pathway amino-acid biosynthesis; L-lysine biosynthesis via DAP pathway; (S)-tetrahydrodipicolinate from L-aspartate: step 4/4. Its function is as follows. Catalyzes the conversion of 4-hydroxy-tetrahydrodipicolinate (HTPA) to tetrahydrodipicolinate. This is 4-hydroxy-tetrahydrodipicolinate reductase from Aquifex aeolicus (strain VF5).